We begin with the raw amino-acid sequence, 63 residues long: Large ribosomal subunit protein bL35 (63 aa).

A disordered region spans residues 26–50 (GSGMRHNLEHKSARKRRALKRDDVL).

Belongs to the bacterial ribosomal protein bL35 family.

The protein is Large ribosomal subunit protein bL35 of Bifidobacterium animalis subsp. lactis (strain AD011).